Here is a 145-residue protein sequence, read N- to C-terminus: Bacilliredoxin SAR1592 (145 aa).

The protein belongs to the bacilliredoxin family.

In Staphylococcus aureus (strain MRSA252), this protein is Bacilliredoxin SAR1592.